A 32-amino-acid polypeptide reads, in one-letter code: ATP synthase subunit O, mitochondrial (32 aa).

This sequence belongs to the ATPase delta chain family. As to quaternary structure, F-type ATPases have 2 components, CF(1) - the catalytic core - and CF(0) - the membrane proton channel. CF(1) has five subunits: alpha(3), beta(3), gamma(1), delta(1), epsilon(1). CF(0) has three main subunits: a, b and c.

It localises to the mitochondrion. The protein localises to the mitochondrion inner membrane. Mitochondrial membrane ATP synthase (F(1)F(0) ATP synthase or Complex V) produces ATP from ADP in the presence of a proton gradient across the membrane which is generated by electron transport complexes of the respiratory chain. F-type ATPases consist of two structural domains, F(1) - containing the extramembraneous catalytic core and F(0) - containing the membrane proton channel, linked together by a central stalk and a peripheral stalk. During catalysis, ATP synthesis in the catalytic domain of F(1) is coupled via a rotary mechanism of the central stalk subunits to proton translocation. Part of the complex F(0) domain and the peripheric stalk, which acts as a stator to hold the catalytic alpha(3)beta(3) subcomplex and subunit a/ATP6 static relative to the rotary elements. The chain is ATP synthase subunit O, mitochondrial from Spinacia oleracea (Spinach).